The primary structure comprises 482 residues: Lipoamide acyltransferase component of branched-chain alpha-keto acid dehydrogenase complex, mitochondrial (482 aa).

The transit peptide at 1–61 (MAAALVLRTW…QWLKTTAALQ (61 aa)) directs the protein to the mitochondrion. The Lipoyl-binding domain occupies 64–139 (IVQFKLSDIG…YVGKPLVDIE (76 aa)). At lysine 105 the chain carries N6-lipoyllysine. Lysine 133 bears the N6-succinyllysine mark. The critical for association with PPM1K stretch occupies residues 145–160 (DSEEDVVETPAVSHDE). The tract at residues 146 to 171 (SEEDVVETPAVSHDEHTHQEIKGQKT) is disordered. Residues 157–168 (SHDEHTHQEIKG) are compositionally biased toward basic and acidic residues. One can recognise a Peripheral subunit-binding (PSBD) domain in the interval 172–209 (LATPAVRRLAMENNIKLSEVIGSGKDGRILKEDILNYL). Lysine 196 is subject to N6-acetyllysine; alternate. Lysine 196 carries the N6-succinyllysine; alternate modification. At lysine 202 the chain carries N6-acetyllysine. The span at 218–230 (PPSPKAEIMPPPP) shows a compositional bias: pro residues. Residues 218-238 (PPSPKAEIMPPPPKPKDRTIP) form a disordered region. Position 220 is a phosphoserine (serine 220). Lysine 243 and lysine 250 each carry N6-acetyllysine. At lysine 261 the chain carries N6-succinyllysine. N6-acetyllysine; alternate is present on lysine 289. An N6-succinyllysine; alternate modification is found at lysine 289. A CoA-binding site is contributed by arginine 291. An N6-acetyllysine mark is found at lysine 295 and lysine 304. The CoA site is built by serine 306, aspartate 349, glutamine 378, serine 399, asparagine 400, serine 403, glycine 424, and isoleucine 426. At lysine 435 the chain carries N6-acetyllysine. Lysine 440 carries the N6-acetyllysine; alternate modification. The residue at position 440 (lysine 440) is an N6-succinyllysine; alternate. Residues histidine 452 and aspartate 456 contribute to the active site.

This sequence belongs to the 2-oxoacid dehydrogenase family. In terms of assembly, forms a 24-polypeptide structural core with octahedral symmetry that represents the E2 component of the branched-chain alpha-ketoacid dehydrogenase (BCKDH) complex. The BCKDH complex is composed of three major building blocks E1, E2 and E3. It is organized around E2, a 24-meric cubic core composed of DBT, to which are associated 6 to 12 copies of E1, and approximately 6 copies of the dehydrogenase E3, a DLD dimer. Interacts with PPM1K with a 24:1 stoichiometry; the N-terminal region (residues 49-61) of PPM1K and C-terminal linker of the lipoyl domain of DBT/E2 (residues 145-160) are critical for this interaction whereas the lipoyl prosthetic group is dispensable. This interaction requires colocalization in mitochondria. PPM1K competes with BCKDK for binding to DBT; this interaction is modulated by branched-chain alpha-keto acids (BCKAs). At steady state, BCKDH holoenzyme preferentially binds BCKDK and BCKDHA is phosphorylated. In response to high levels of BCKAs, BCKDK is replaced by PPM1K leading to BCKDHA dephosphorylation. (R)-lipoate serves as cofactor. As to expression, expressed in kidney (at protein level).

It is found in the mitochondrion matrix. The enzyme catalyses N(6)-[(R)-dihydrolipoyl]-L-lysyl-[protein] + 2-methylpropanoyl-CoA = N(6)-[(R)-S(8)-2-methylpropanoyldihydrolipoyl]-L-lysyl-[protein] + CoA. Functionally, the branched-chain alpha-keto dehydrogenase complex catalyzes the overall conversion of alpha-keto acids to acyl-CoA and CO(2). It contains multiple copies of three enzymatic components: branched-chain alpha-keto acid decarboxylase (E1), lipoamide acyltransferase (E2) and lipoamide dehydrogenase (E3). Within this complex, the catalytic function of this enzyme is to accept, and to transfer to coenzyme A, acyl groups that are generated by the branched-chain alpha-keto acid decarboxylase component. The chain is Lipoamide acyltransferase component of branched-chain alpha-keto acid dehydrogenase complex, mitochondrial (DBT) from Bos taurus (Bovine).